We begin with the raw amino-acid sequence, 172 residues long: Protein GrpE (172 aa).

It belongs to the GrpE family. Homodimer.

The protein localises to the cytoplasm. Participates actively in the response to hyperosmotic and heat shock by preventing the aggregation of stress-denatured proteins, in association with DnaK and GrpE. It is the nucleotide exchange factor for DnaK and may function as a thermosensor. Unfolded proteins bind initially to DnaJ; upon interaction with the DnaJ-bound protein, DnaK hydrolyzes its bound ATP, resulting in the formation of a stable complex. GrpE releases ADP from DnaK; ATP binding to DnaK triggers the release of the substrate protein, thus completing the reaction cycle. Several rounds of ATP-dependent interactions between DnaJ, DnaK and GrpE are required for fully efficient folding. This is Protein GrpE from Thermotoga sp. (strain RQ2).